The primary structure comprises 286 residues: MSFNKVPNIPGAPALSALLKVSVIGGLGVYALTNSLYNVDGGHRAVMFNRLTGIKEKVYPEGTHFMVPWFERPIIYDVRARPYLVESTTGSHDLQMVKIGLRVLTRPMGDRLPQIYRTLGENYSERVLPSIIHETLKAVVAQYNASQLITQREAVSREIRKILTERASNFDIALDDVSITTLTFGKEFTAAIEAKQVAAQEAERAKFIVEKAEQDRRSAVIRAQGEAKSAQLIGQAIANNQAFITLRKIEAAREIAQTIAQSANKVYLSSNDLLLNLQEMNLEPKK.

The Mitochondrial matrix portion of the chain corresponds to 1-13 (MSFNKVPNIPGAP). Residues 14 to 32 (ALSALLKVSVIGGLGVYAL) traverse the membrane as a helical; Signal-anchor for type II membrane protein segment. Residues 33–286 (TNSLYNVDGG…LQEMNLEPKK (254 aa)) are Mitochondrial intermembrane-facing. Residues 186 to 219 (KEFTAAIEAKQVAAQEAERAKFIVEKAEQDRRSA) adopt a coiled-coil conformation.

It belongs to the prohibitin family. As to quaternary structure, component of a prohibitin multimeric complex in mitochondrial membranes. Mostly expressed in proliferative tissues, including vasculature, shoot and root apical tissues.

It localises to the mitochondrion inner membrane. Functionally, prohibitin probably acts as a holdase/unfoldase for the stabilization of newly synthesized mitochondrial proteins. This chain is Prohibitin-2, mitochondrial (PHB2), found in Arabidopsis thaliana (Mouse-ear cress).